The chain runs to 559 residues: Beta-glucuronidase (559 aa).

An N-terminal signal peptide occupies residues 1–19; sequence MKRILGLIAYASVPTVINA. Residues N53, N91, N99, and N143 are each glycosylated (N-linked (GlcNAc...) asparagine). The active-site Proton donor is E194. N-linked (GlcNAc...) asparagine glycans are attached at residues N203, N222, and N280. Catalysis depends on E312, which acts as the Nucleophile. N-linked (GlcNAc...) asparagine glycans are attached at residues N427, N440, N465, N491, and N520.

The protein belongs to the glycosyl hydrolase 79 family.

The protein localises to the secreted. It carries out the reaction a beta-D-glucuronoside + H2O = D-glucuronate + an alcohol. Functionally, beta-glucuronidase that hydrolyzes beta-glucuronosyl and 4-O-methyl-beta-glucuronosyl residues of arabinogalactan-protein. Hydrolyzed heparan sulfate only very weakly. Has no activity on xylan from birchwood. Able to catalyze the transglycosylation of glucuronic acid (GlcA) residues from p-nitrophenyl-beta-glucuronic acid (PNP beta-GlcA) to various monosaccharide acceptors such as glucose, galactose and xylose. This chain is Beta-glucuronidase, found in Neurospora crassa (strain ATCC 24698 / 74-OR23-1A / CBS 708.71 / DSM 1257 / FGSC 987).